Consider the following 467-residue polypeptide: Serine/threonine-protein phosphatase 2A 56 kDa regulatory subunit epsilon isoform (467 aa).

Residues Met1–Gln39 form a disordered region. At Ser2 the chain carries N-acetylserine. At Thr7 the chain carries Phosphothreonine. The span at Lys20–Arg29 shows a compositional bias: basic residues. 3 positions are modified to phosphoserine: Ser30, Ser32, and Ser34. Positions Ser30–Gln39 are enriched in low complexity.

This sequence belongs to the phosphatase 2A regulatory subunit B56 family. In terms of assembly, PP2A consists of a common heterodimeric core enzyme, composed of a 36 kDa catalytic subunit (subunit C) and a 65 kDa constant regulatory subunit (PR65 or subunit A), that associates with a variety of regulatory subunits. Proteins that associate with the core dimer include three families of regulatory subunits B (the R2/B/PR55/B55, R3/B''/PR72/PR130/PR59 and R5/B'/B56 families), the 48 kDa variable regulatory subunit, viral proteins, and cell signaling molecules. Interacts with SGO1. Found in a complex with at least ARL2, PPP2CB; PPP2R1A, PPP2R2A, PPP2R5E and TBCD.

The protein localises to the cytoplasm. Its function is as follows. The B regulatory subunit might modulate substrate selectivity and catalytic activity, and might also direct the localization of the catalytic enzyme to a particular subcellular compartment. Interacts with cyclin G in vitro. This Mus musculus (Mouse) protein is Serine/threonine-protein phosphatase 2A 56 kDa regulatory subunit epsilon isoform (Ppp2r5e).